A 552-amino-acid chain; its full sequence is Non-structural protein NS1 (552 aa).

The protein belongs to the orbivirus non-structural protein NS1 family.

The protein is Non-structural protein NS1 (Segment-5) of Bluetongue virus 13 (isolate USA) (BTV 13).